The following is a 695-amino-acid chain: HIPL1 protein (695 aa).

The signal sequence occupies residues 1-23 (MKLHQFLVFLFLFLSCFALSSWA). N-linked (GlcNAc...) asparagine glycans are attached at residues Asn-37, Asn-67, Asn-107, Asn-113, Asn-128, Asn-151, Asn-175, Asn-190, Asn-208, Asn-337, Asn-429, Asn-511, Asn-527, Asn-641, and Asn-648. Ser-665 carries GPI-anchor amidated serine lipidation. Residues 666-695 (SSCYKHINGFHGSLVVLFVSLSLILLGLLN) constitute a propeptide, removed in mature form.

The protein belongs to the PQQ oxidoreductase GdhB family. Pyrroloquinoline quinone serves as cofactor.

The protein localises to the cell membrane. This Arabidopsis thaliana (Mouse-ear cress) protein is HIPL1 protein (HIPL1).